A 152-amino-acid chain; its full sequence is Sulfur-rich protein (152 aa).

The tract at residues 1–20 is disordered; that stretch reads MSTVPVVQGAGSSNSAQDIS. 2 helical membrane passes run 43 to 63 and 69 to 89; these read VGLVVIGLLLVIATLIFLVSA and AIYLVAIPAILGCVNICVGIL.

It localises to the membrane. The protein is Sulfur-rich protein (srp) of Chlamydia trachomatis serovar A (strain ATCC VR-571B / DSM 19440 / HAR-13).